We begin with the raw amino-acid sequence, 92 residues long: C-C motif chemokine 4 (92 aa).

The N-terminal stretch at 1–23 (MKLCVTVLSLLVLAAAFCSPALS) is a signal peptide. Intrachain disulfides connect Cys34-Cys58 and Cys35-Cys74.

This sequence belongs to the intercrine beta (chemokine CC) family. Homodimer. Interacts with CCR5. In terms of tissue distribution, detected in peripheral blood mononuclear cells and lymph nodes.

The protein resides in the secreted. Functionally, monokine with inflammatory and chemokinetic properties. This Macaca mulatta (Rhesus macaque) protein is C-C motif chemokine 4 (CCL4).